We begin with the raw amino-acid sequence, 270 residues long: ATP synthase subunit b 1 (270 aa).

A helical transmembrane segment spans residues 2–22; it reads LIDWFTVIAQLINFLVLVWLL.

The protein belongs to the ATPase B chain family. F-type ATPases have 2 components, F(1) - the catalytic core - and F(0) - the membrane proton channel. F(1) has five subunits: alpha(3), beta(3), gamma(1), delta(1), epsilon(1). F(0) has three main subunits: a(1), b(2) and c(10-14). The alpha and beta chains form an alternating ring which encloses part of the gamma chain. F(1) is attached to F(0) by a central stalk formed by the gamma and epsilon chains, while a peripheral stalk is formed by the delta and b chains.

The protein localises to the cell inner membrane. Its function is as follows. F(1)F(0) ATP synthase produces ATP from ADP in the presence of a proton or sodium gradient. F-type ATPases consist of two structural domains, F(1) containing the extramembraneous catalytic core and F(0) containing the membrane proton channel, linked together by a central stalk and a peripheral stalk. During catalysis, ATP synthesis in the catalytic domain of F(1) is coupled via a rotary mechanism of the central stalk subunits to proton translocation. Component of the F(0) channel, it forms part of the peripheral stalk, linking F(1) to F(0). In Marinomonas sp. (strain MWYL1), this protein is ATP synthase subunit b 1.